The following is a 79-amino-acid chain: Schistosomin (79 aa).

Post-translationally, contains four disulfide bonds. In terms of tissue distribution, growth-controlling neurosecretory light green cells, in the cerebral ganglia of the CNS.

The protein resides in the secreted. In terms of biological role, anti-gonadotropic neuropeptide. It also decreases the binding capacity of calfluxin to membrane-bound receptors of the albumen gland. This leads to inhibition of the reproductive activities of the infected snail. The chain is Schistosomin from Lymnaea stagnalis (Great pond snail).